A 393-amino-acid chain; its full sequence is Staphopain B (393 aa).

A signal peptide spans 1–36; the sequence is MNSSCKTRVFNIISIIMVSMLILSLGAFANNNKAKA. Positions 37 to 219 are excised as a propeptide; sequence DSHSKQLEIN…KVEENEAIQE (183 aa). Active-site residues include cysteine 243, histidine 340, and asparagine 360.

The protein belongs to the peptidase C47 family. In the cytoplasm, prematurely activated/folded SspB forms a stable non-covalent complex with SspC. Proteolytically cleaved by staphylococcal serine protease (SspA).

The protein resides in the secreted. Its activity is regulated as follows. Prematurely activated/folded staphopain B is inhibited by staphostatin B (SspC), which is probably required to protect staphylococcal cytoplasmic proteins from degradation by SspB. Its function is as follows. Cysteine protease that plays an important role in the inhibition of host innate immune response. Degrades host elastin, fibrogen, fibronectin and kininogen. Blocks phagocytosis of opsonised S.aureus by neutrophils and monocytes by inducing their death in a proteolytic activity-dependent manner. Decreases surface expression of the 'don't eat me' signal CD31 on neutrophils. Cleaves host galectin-3/LGALS3, thereby inhibiting the neutrophil-activating ability of the lectin. This Staphylococcus aureus protein is Staphopain B (sspB).